Reading from the N-terminus, the 431-residue chain is tRNA(Ile)-lysidine synthase (431 aa).

Position 26–31 (26–31 (SGGVDS)) interacts with ATP.

Belongs to the tRNA(Ile)-lysidine synthase family.

The protein resides in the cytoplasm. It carries out the reaction cytidine(34) in tRNA(Ile2) + L-lysine + ATP = lysidine(34) in tRNA(Ile2) + AMP + diphosphate + H(+). Ligates lysine onto the cytidine present at position 34 of the AUA codon-specific tRNA(Ile) that contains the anticodon CAU, in an ATP-dependent manner. Cytidine is converted to lysidine, thus changing the amino acid specificity of the tRNA from methionine to isoleucine. The protein is tRNA(Ile)-lysidine synthase of Wolbachia pipientis wMel.